Here is a 152-residue protein sequence, read N- to C-terminus: CASP-like protein 5B1 (152 aa).

Over 1 to 11 (MKKMIGSPGTM) the chain is Cytoplasmic. The chain crosses the membrane as a helical span at residues 12–32 (SGLILRLGQCATAAASIGVMV). The Extracellular portion of the chain corresponds to 33–42 (SSYDFSNYTA). N39 carries an N-linked (GlcNAc...) asparagine glycan. The helical transmembrane segment at 43-63 (FCFLVASMGLQLIWSFGLACL) threads the bilayer. Residues 64 to 77 (DVYAIRRKSDLRSP) are Cytoplasmic-facing. A helical transmembrane segment spans residues 78-98 (ILLSLFTVGDWVTALLALAAA). The Extracellular segment spans residues 99 to 131 (CSSAGVTVLFTKDTEFCRQQPALSCDRFQISVG). The helical transmembrane segment at 132 to 152 (LSFFNWFLAAISSHTMFWILI) threads the bilayer.

It belongs to the Casparian strip membrane proteins (CASP) family. As to quaternary structure, homodimer and heterodimers. As to expression, expressed in leaves, exclusively in hair cells (e.g. differentiated trichomes and immature cells).

The protein localises to the cell membrane. The protein is CASP-like protein 5B1 of Arabidopsis thaliana (Mouse-ear cress).